The chain runs to 347 residues: MLMREVTKEERSEFYSKEWSAKKIPKFIVDTLESREFGFDHNGEGPSDRKNQYSDIRDLEDYIRATSPYAVYSSVAFYENPREMEGWRGAELVFDIDAKDLPLKRCNHEPGTVCPICLEDAKELAKDTLIILREELGFENIHVVYSGRGYHIRILDEWALQLDSKSRERILAFISASEIENVEEFRRFLLEKRGWFVLKHGYPRVFRLRLGYFILRVNVPHLLSIGIRRNIAKKILDHKEEIYEGFVRKAILASFPEGVGIESMAKLFALSTRFSKAYFDGRVTVDIKRILRLPSTLHSKVGLIATYVGTKEREVMKFNPFRHAVPKFRKKEVREAYKLWRESLEYE.

Active-site residues include Asp95 and Asp97. 4 residues coordinate Zn(2+): Cys106, His108, Cys114, and Cys117. Positions 106–117 match the Zinc knuckle motif motif; the sequence is CNHEPGTVCPIC. The active site involves Asp280.

This sequence belongs to the eukaryotic-type primase small subunit family. As to quaternary structure, heterodimer of a small subunit (PriS) and a large subunit (PriL). Both participate in formation of the active center, but the ATP-binding site is exclusively located on the small subunit. Mg(2+) serves as cofactor. Requires Mn(2+) as cofactor.

Functionally, catalytic subunit of DNA primase, an RNA polymerase that catalyzes the synthesis of short RNA molecules used as primers for DNA polymerase during DNA replication. The small subunit contains the primase catalytic core and has DNA synthesis activity on its own. Binding to the large subunit stabilizes and modulates the activity, increasing the rate of DNA synthesis while decreasing the length of the DNA fragments, and conferring RNA synthesis capability. The DNA polymerase activity may enable DNA primase to also catalyze primer extension after primer synthesis. May also play a role in DNA repair. The protein is DNA primase small subunit PriS of Pyrococcus furiosus (strain ATCC 43587 / DSM 3638 / JCM 8422 / Vc1).